Reading from the N-terminus, the 101-residue chain is Small ribosomal subunit protein uS14 (101 aa).

This sequence belongs to the universal ribosomal protein uS14 family. In terms of assembly, part of the 30S ribosomal subunit. Contacts proteins S3 and S10.

Functionally, binds 16S rRNA, required for the assembly of 30S particles and may also be responsible for determining the conformation of the 16S rRNA at the A site. The sequence is that of Small ribosomal subunit protein uS14 from Ectopseudomonas mendocina (strain ymp) (Pseudomonas mendocina).